The following is a 528-amino-acid chain: Na(+)/H(+) antiporter NhaB (528 aa).

Helical transmembrane passes span 28–50, 67–87, 98–118, 140–160, 240–260, 305–325, 350–370, 391–411, 449–469, and 476–496; these read FLVINPLLFFYVSPFVAGWVLVV, PGGLLAIQAVFIGMTSPSQVL, LLLVFMVAGIYFMKQLLLFVF, AFLSAFLDALTVIAVIIAVAV, FFLRMSPVTMPVLVAGIFTCF, ALIGVWLIAGLALHLASVGLI, EEALPFTALLAVFFAIVGVII, LVIFYIANGLLSMVSDNVFVG, ATPNGQAAFLFLLTSAIAPLI, and MVWMALPYTIVLSIVGVMAIE.

It belongs to the NhaB Na(+)/H(+) (TC 2.A.34) antiporter family.

The protein resides in the cell inner membrane. The catalysed reaction is 2 Na(+)(in) + 3 H(+)(out) = 2 Na(+)(out) + 3 H(+)(in). Na(+)/H(+) antiporter that extrudes sodium in exchange for external protons. In Shewanella frigidimarina (strain NCIMB 400), this protein is Na(+)/H(+) antiporter NhaB.